A 297-amino-acid chain; its full sequence is Homoserine kinase (297 aa).

82–92 (PVSRGLGSSAA) is a binding site for ATP.

The protein belongs to the GHMP kinase family. Homoserine kinase subfamily.

It localises to the cytoplasm. The enzyme catalyses L-homoserine + ATP = O-phospho-L-homoserine + ADP + H(+). It participates in amino-acid biosynthesis; L-threonine biosynthesis; L-threonine from L-aspartate: step 4/5. Functionally, catalyzes the ATP-dependent phosphorylation of L-homoserine to L-homoserine phosphate. This is Homoserine kinase from Clostridium botulinum (strain 657 / Type Ba4).